A 100-amino-acid polypeptide reads, in one-letter code: Urease subunit gamma (100 aa).

Belongs to the urease gamma subunit family. In terms of assembly, heterotrimer of UreA (gamma), UreB (beta) and UreC (alpha) subunits. Three heterotrimers associate to form the active enzyme.

The protein resides in the cytoplasm. It catalyses the reaction urea + 2 H2O + H(+) = hydrogencarbonate + 2 NH4(+). It participates in nitrogen metabolism; urea degradation; CO(2) and NH(3) from urea (urease route): step 1/1. The sequence is that of Urease subunit gamma from Chelativorans sp. (strain BNC1).